We begin with the raw amino-acid sequence, 96 residues long: Small ribosomal subunit protein uS17 (96 aa).

The protein belongs to the universal ribosomal protein uS17 family. As to quaternary structure, part of the 30S ribosomal subunit.

In terms of biological role, one of the primary rRNA binding proteins, it binds specifically to the 5'-end of 16S ribosomal RNA. This is Small ribosomal subunit protein uS17 from Deinococcus radiodurans (strain ATCC 13939 / DSM 20539 / JCM 16871 / CCUG 27074 / LMG 4051 / NBRC 15346 / NCIMB 9279 / VKM B-1422 / R1).